We begin with the raw amino-acid sequence, 537 residues long: Woronin body major protein hexA (537 aa).

3 stretches are compositionally biased toward basic and acidic residues: residues 1–17 (MYSV…RDAQ), 59–70 (DRTSHVEREDTR), and 116–134 (DSRV…RSEN). Disordered regions lie at residues 1-20 (MYSV…QRTA), 59-79 (DRTS…PDPR), 116-200 (DSRV…KPVY), and 269-295 (PKPL…SRPS). Residues 135–144 (NAKQNKNKNN) show a composition bias toward low complexity. Residues 272 to 281 (LETRKGDSFS) show a composition bias toward basic and acidic residues.

It belongs to the eIF-5A family. Hex1 subfamily. As to quaternary structure, forms oligomers. Self-assembles into hexagonal rods. Binds directly or indirectly to the Woronin body tether lah.

The protein localises to the cell septum. The protein resides in the cytoplasm. Functionally, major component of Woronin bodies, fungal-specific organelles that occlude septal pores in order to separate intact from damaged compartments. HexA binds directly or indirectly to the Woronin body tether that in turn is anchored at the rim of the septal pore. Woronin bodies are important for stress resistance and virulence. The chain is Woronin body major protein hexA from Aspergillus fumigatus (strain ATCC MYA-4609 / CBS 101355 / FGSC A1100 / Af293) (Neosartorya fumigata).